Reading from the N-terminus, the 448-residue chain is ATP-dependent RNA helicase sub2 (448 aa).

Residues 19-29 show a composition bias toward low complexity; it reads DAAATTAAPAA. The interval 19 to 43 is disordered; sequence DAAATTAAPAANGAQDKKGDLTVSG. Residues 58-86 carry the Q motif motif; sequence TGFRDFLLKGELLRAITDCGFEHPSEVQQ. Positions 89–271 constitute a Helicase ATP-binding domain; that stretch reads IPTAILNVDV…KKFMRNPLEV (183 aa). 102-109 serves as a coordination point for ATP; that stretch reads AKSGLGKT. The DECD box signature appears at 211–214; the sequence is DECD. The region spanning 283–444 is the Helicase C-terminal domain; it reads GLQQYYIKLS…EYPEGGVDSS (162 aa).

This sequence belongs to the DEAD box helicase family. DECD subfamily.

The protein resides in the nucleus. It catalyses the reaction ATP + H2O = ADP + phosphate + H(+). Functionally, ATP-binding RNA helicase involved in transcription elongation and required for the export of mRNA out of the nucleus. SUB2 also plays a role in pre-mRNA splicing and spliceosome assembly. May be involved in rDNA and telomeric silencing, and maintenance of genome integrity. The sequence is that of ATP-dependent RNA helicase sub2 (sub2) from Aspergillus fumigatus (strain ATCC MYA-4609 / CBS 101355 / FGSC A1100 / Af293) (Neosartorya fumigata).